A 98-amino-acid polypeptide reads, in one-letter code: DNA-binding protein Fis (98 aa).

The H-T-H motif DNA-binding region spans glutamine 74–lysine 93.

The protein belongs to the transcriptional regulatory Fis family. In terms of assembly, homodimer.

In terms of biological role, activates ribosomal RNA transcription. Plays a direct role in upstream activation of rRNA promoters. The protein is DNA-binding protein Fis of Pectobacterium atrosepticum (strain SCRI 1043 / ATCC BAA-672) (Erwinia carotovora subsp. atroseptica).